The chain runs to 251 residues: Sugar fermentation stimulation protein homolog (251 aa).

Belongs to the SfsA family.

The sequence is that of Sugar fermentation stimulation protein homolog from Prochlorococcus marinus (strain MIT 9313).